The primary structure comprises 41 residues: Large ribosomal subunit protein bL36 (41 aa).

This sequence belongs to the bacterial ribosomal protein bL36 family.

This is Large ribosomal subunit protein bL36 from Rickettsia canadensis (strain McKiel).